We begin with the raw amino-acid sequence, 883 residues long: Integrator complex subunit 6 (883 aa).

Residues 3 to 227 enclose the VWFA domain; that stretch reads ILLFLIDTSA…QCLESLVQKV (225 aa). An Inhibitory loop motif is present at residues 625–632; the sequence is MMIDEADE. Residues 666–686 form a disordered region; it reads RRQSPAVNSHIGGKGPPAPMT. A Phosphoserine modification is found at S800.

It belongs to the Integrator subunit 6 family. Component of the Integrator complex, composed of core subunits INTS1, INTS2, INTS3, INTS4, INTS5, INTS6, INTS7, INTS8, INTS9/RC74, INTS10, INTS11/CPSF3L, INTS12, INTS13, INTS14 and INTS15. The core complex associates with protein phosphatase 2A subunits PPP2CA and PPP2R1A, to form the Integrator-PP2A (INTAC) complex.

It localises to the nucleus. The protein resides in the chromosome. Functionally, component of the integrator complex, a multiprotein complex that terminates RNA polymerase II (Pol II) transcription in the promoter-proximal region of genes. The integrator complex provides a quality checkpoint during transcription elongation by driving premature transcription termination of transcripts that are unfavorably configured for transcriptional elongation: the complex terminates transcription by (1) catalyzing dephosphorylation of the C-terminal domain (CTD) of Pol II subunit POLR2A/RPB1 and SUPT5H/SPT5, (2) degrading the exiting nascent RNA transcript via endonuclease activity and (3) promoting the release of Pol II from bound DNA. The integrator complex is also involved in terminating the synthesis of non-coding Pol II transcripts, such as enhancer RNAs (eRNAs), small nuclear RNAs (snRNAs), telomerase RNAs and long non-coding RNAs (lncRNAs). Within the integrator complex, INTS6 acts as a molecular adapter that promotes assembly of protein phosphatase 2A (PP2A) subunits to the integrator core complex, promoting recruitment of PP2A to transcription pause-release checkpoint. Mediates recruitment of cytoplasmic dynein to the nuclear envelope, probably as component of the integrator complex. The polypeptide is Integrator complex subunit 6 (Ints6) (Mus musculus (Mouse)).